Here is a 978-residue protein sequence, read N- to C-terminus: Receptor like protein 21 (978 aa).

Positions 1 to 27 are cleaved as a signal peptide; it reads MLLAMEGKLFLCQYLIWVMLLLGQLHG. The Extracellular portion of the chain corresponds to 28–930; that stretch reads CTSCIEKERE…EEDDKAAIDM (903 aa). 5 N-linked (GlcNAc...) asparagine glycosylation sites follow: Asn64, Asn79, Asn102, Asn116, and Asn155. LRR repeat units lie at residues 141-167, 169-189, 190-213, 214-237, 238-262, 264-287, 288-310, 312-335, 337-361, 362-385, 386-409, 410-432, 433-455, 457-480, 481-504, 506-529, 530-553, 554-577, 579-601, 602-625, 627-646, 647-671, 673-693, 694-716, 788-811, 812-835, 837-859, and 860-885; these read LRNLKIMDLSTNYFNYSTFPFLNAATS, TTLILTYNEMDGPFPIKGLKD, LTNLELLDLRANKLNGSMQELIHL, KKLKALDLSSNKFSSSMELQELQN, LINLEVLGLAQNHVDGPIPIEVFCK, KNLRDLDLKGNHFVGQIPLCLGSL, KKLRVLDLSSNQLSGDLPSSFSS, ESLEYLSLSDNNFDGSFSLNPLTN, TNLKLFKLSSRSHTIQVKMESTWQP, NFQLSVVVLRFCSLEKIPSFLLYQ, KKLRLVDLSSNNLSGNIPTWLLTN, NPELEVLQLQNNSFTIFPIPTMV, HNLQIFDFSANNIGKFPDKMDHA, PNLVRLNGSNNGFQGYFPTSIGEM, KNISFLDLSYNNFSGKLPRSFVTG, VSIMFLKLSHNKFSGRFLPRETNF, PSLDVLRMDNNLFTGNIGGGLSNS, TMLRILDMSNNGLSGAIPRWLFEF, YLDYVLISNNFLEGTIPPSLLGM, PFLSFLDLSGNQFSGALPSHVDSE, GIYMFLHNNNFTGPIPDTLL, KSVQILDLRNNKLSGSIPQFDDTQS, NILLLKGNNLTGSIPRELCDL, SNVRLLDLSDNKLNGVIPSCLSN, LRLMYGMDLSNNELSGVIPTELGD, LLKLRTLNLSHNSLLGSIPSSFSK, IDVESLDLSHNMLQGSIPQLLSS, and LTSLAVFDVSSNNLSGIIPQGRQFNT. N-linked (GlcNAc...) asparagine glycosylation is present at Asn204. N-linked (GlcNAc...) asparagine glycosylation occurs at Asn335. Residues Asn397 and Asn420 are each glycosylated (N-linked (GlcNAc...) asparagine). Residues Asn463, Asn482, and Asn492 are each glycosylated (N-linked (GlcNAc...) asparagine). N-linked (GlcNAc...) asparagine glycosylation occurs at Asn552. Asn636 carries N-linked (GlcNAc...) asparagine glycosylation. N-linked (GlcNAc...) asparagine glycans are attached at residues Asn681 and Asn716. Residue Asn819 is glycosylated (N-linked (GlcNAc...) asparagine). N-linked (GlcNAc...) asparagine glycosylation occurs at Asn872. Positions 902-922 are disordered; it reads TSRSCETNKSPEEADNGQEEE. The helical transmembrane segment at 931–951 threads the bilayer; sequence MVFYFSTASIYVTALIGVLVL. The Cytoplasmic segment spans residues 952–978; the sequence is MCFDCPWRRAWLRIVDAFIASAKHVLP.

Belongs to the RLP family.

Its subcellular location is the cell membrane. The polypeptide is Receptor like protein 21 (Arabidopsis thaliana (Mouse-ear cress)).